The sequence spans 215 residues: LysM and putative peptidoglycan-binding domain-containing protein 2 (215 aa).

The segment at 1–40 (MADSSPAPSLRAGGPREPRPSAPSPPPPHSRLGSEAEEAE) is disordered. The residue at position 2 (Ala-2) is an N-acetylalanine. 4 positions are modified to phosphoserine: Ser-5, Ser-24, Ser-34, and Ser-58. The segment covering 20–29 (PSAPSPPPPH) has biased composition (pro residues). One can recognise a LysM domain in the interval 72–116 (VEHRVRAGDTLQGIALKYGVSMEQIKRANKLFTNDCIFLKKTLNI). The disordered stretch occupies residues 194–215 (AKKLKGESRDEEGLYTASLYHS).

This is LysM and putative peptidoglycan-binding domain-containing protein 2 (LYSMD2) from Bos taurus (Bovine).